A 190-amino-acid chain; its full sequence is Putative serine carboxypeptidase-like 54 (190 aa).

Residues 1-25 form the signal peptide; that stretch reads MATKTFSLPFLLIVCIFSQLSSTFG. 3 N-linked (GlcNAc...) asparagine glycosylation sites follow: N58, N59, and N105.

It belongs to the peptidase S10 family.

The protein localises to the secreted. This Arabidopsis thaliana (Mouse-ear cress) protein is Putative serine carboxypeptidase-like 54 (SCPL54).